The sequence spans 299 residues: Aspartate carbamoyltransferase catalytic subunit (299 aa).

Residues Arg-51 and Thr-52 each coordinate carbamoyl phosphate. Position 80 (Lys-80) interacts with L-aspartate. Carbamoyl phosphate-binding residues include Arg-101, His-129, and Gln-132. Arg-162 and Arg-221 together coordinate L-aspartate. Carbamoyl phosphate contacts are provided by Leu-260 and Pro-261.

It belongs to the aspartate/ornithine carbamoyltransferase superfamily. ATCase family. In terms of assembly, heterooligomer of catalytic and regulatory chains.

It carries out the reaction carbamoyl phosphate + L-aspartate = N-carbamoyl-L-aspartate + phosphate + H(+). The protein operates within pyrimidine metabolism; UMP biosynthesis via de novo pathway; (S)-dihydroorotate from bicarbonate: step 2/3. Its function is as follows. Catalyzes the condensation of carbamoyl phosphate and aspartate to form carbamoyl aspartate and inorganic phosphate, the committed step in the de novo pyrimidine nucleotide biosynthesis pathway. The polypeptide is Aspartate carbamoyltransferase catalytic subunit (Sulfolobus acidocaldarius (strain ATCC 33909 / DSM 639 / JCM 8929 / NBRC 15157 / NCIMB 11770)).